We begin with the raw amino-acid sequence, 505 residues long: Facilitated trehalose transporter Tret1 (505 aa).

Residues 1-46 lie on the Cytoplasmic side of the membrane; sequence MEMEIKDENLRNSVPFVRQLSTDSVKTKTEYDNEDGTPYKSTTQKL. A helical transmembrane segment spans residues 47-67; it reads FLWTQLLAAFAVSVGSMNVGF. Over 68–91 the chain is Extracellular; sequence SSGYTSPAVLTMNITLDITKEEIT. N-linked (GlcNAc...) asparagine glycosylation occurs at Asn80. Residues 92 to 112 form a helical membrane-spanning segment; it reads WVGGLMPLAALVGGIVGGPLI. Topologically, residues 113–124 are cytoplasmic; that stretch reads EYLGRKKTIMGT. A helical transmembrane segment spans residues 125–145; sequence AVPFTIGWMLIANAINVVMVF. The Extracellular portion of the chain corresponds to 146–149; the sequence is AGRV. A helical transmembrane segment spans residues 150 to 170; sequence ICGVCVGIVSLAFPVYIGETI. The Cytoplasmic portion of the chain corresponds to 171–175; the sequence is QPEVR. Residues 176 to 196 form a helical membrane-spanning segment; the sequence is GALGLLPTAFGNTGILLAFLV. Topologically, residues 197–201 are extracellular; that stretch reads GSYLD. Residues 202-222 traverse the membrane as a helical segment; the sequence is WSNLAFFGAAIPVPFFLLMIL. Over 223-286 the chain is Cytoplasmic; it reads TPETPRWYVS…QLFSKRYLPA (64 aa). Residues 287–307 form a helical membrane-spanning segment; sequence VMISLGLMLFQQLTGINAVIF. Topologically, residues 308–323 are extracellular; it reads YAASIFQMSGSSVDEN. A helical membrane pass occupies residues 324 to 344; sequence LASIIIGVVNFISTFIATMLI. Over 345–350 the chain is Cytoplasmic; that stretch reads DRLGRK. Residues 351-371 traverse the membrane as a helical segment; that stretch reads VLLYISSVAMITTLLALGAYF. Residues 372–390 are Extracellular-facing; sequence YLKQNHIDVTAYGWLPLAC. Residues 391-411 traverse the membrane as a helical segment; that stretch reads LVIYVLGFSIGFGPIPWLMLG. Topologically, residues 412-419 are cytoplasmic; the sequence is EILPSKIR. The chain crosses the membrane as a helical span at residues 420-437; sequence GTAASLATGFNWTCTFIV. At 438-451 the chain is on the extracellular side; sequence TKTFQNIIDAIYMH. Residues 452 to 472 traverse the membrane as a helical segment; sequence GTLWLFAVICIGGLLFVIFFV. Residues 473 to 505 are Cytoplasmic-facing; the sequence is PETKGKSLEEIEMKLTSGSRRVRNISKQPENIC.

It belongs to the major facilitator superfamily. Sugar transporter (TC 2.A.1.1) family. Trehalose transporter subfamily. Expressed in many larval tissues at a low level, moderate levels of expression are seen in testis and head and highest expression in muscle.

It localises to the cell membrane. Its function is as follows. High-capacity facilitative transporter for trehalose. Does not transport maltose, sucrose or lactose. Mediates the bidirectional transfer of trehalose. Responsible for the transport of trehalose synthesized in the fat body and the incorporation of trehalose into other tissues that require a carbon source, thereby regulating trehalose levels in the hemolymph. The polypeptide is Facilitated trehalose transporter Tret1 (Bombyx mori (Silk moth)).